A 216-amino-acid polypeptide reads, in one-letter code: FMN-dependent NADH:quinone oxidoreductase 3 (216 aa).

Residues Ser10 and 16 to 18 contribute to the FMN site; that span reads SAS.

It belongs to the azoreductase type 1 family. As to quaternary structure, homodimer. The cofactor is FMN.

The catalysed reaction is 2 a quinone + NADH + H(+) = 2 a 1,4-benzosemiquinone + NAD(+). The enzyme catalyses N,N-dimethyl-1,4-phenylenediamine + anthranilate + 2 NAD(+) = 2-(4-dimethylaminophenyl)diazenylbenzoate + 2 NADH + 2 H(+). In terms of biological role, quinone reductase that provides resistance to thiol-specific stress caused by electrophilic quinones. Functionally, also exhibits azoreductase activity. Catalyzes the reductive cleavage of the azo bond in aromatic azo compounds to the corresponding amines. The chain is FMN-dependent NADH:quinone oxidoreductase 3 from Pseudomonas fluorescens (strain ATCC BAA-477 / NRRL B-23932 / Pf-5).